We begin with the raw amino-acid sequence, 69 residues long: Conotoxin Cal12.1p5 (69 aa).

Residues 1-23 constitute a propeptide that is removed on maturation; it reads DLITNSYTRGKPRHVTSWRNLKT.

Contains 4 disulfide bonds. In terms of tissue distribution, expressed by the venom duct.

It is found in the secreted. The chain is Conotoxin Cal12.1p5 from Californiconus californicus (California cone).